The sequence spans 98 residues: Integration host factor subunit alpha (98 aa).

The tract at residues 49–70 (FGNFDLRDKNQRPGRNPKTGED) is disordered.

This sequence belongs to the bacterial histone-like protein family. As to quaternary structure, heterodimer of an alpha and a beta chain.

Functionally, this protein is one of the two subunits of integration host factor, a specific DNA-binding protein that functions in genetic recombination as well as in transcriptional and translational control. The polypeptide is Integration host factor subunit alpha (Sodalis glossinidius (strain morsitans)).